The primary structure comprises 92 residues: Small ribosomal subunit protein uS19 (92 aa).

Belongs to the universal ribosomal protein uS19 family.

Functionally, protein S19 forms a complex with S13 that binds strongly to the 16S ribosomal RNA. The polypeptide is Small ribosomal subunit protein uS19 (Limosilactobacillus reuteri (strain DSM 20016) (Lactobacillus reuteri)).